The primary structure comprises 870 residues: MASKISQTPEKQPSTAYDPLSIETRWQQSWKEQGLYKTKEPTKSQKTFYALSMFPYPSGTLHMGHVRNYVITDVIARLHRMKGDSVLHPMGWDAFGLPAENAAIERGIPADIWTYKNIEDMRNQLNRLGLSIDWDKEVTTCKEEYYKWTQYIFLELYEAGLAYQKSATVNWDPIDKTVLANEQVDANGRSWRSGALVEKKKLKQWFLKITDFADELLEDIELLSGWPQNVKTMQQNWIGRSNGTEIDFYIKGKNNIFITVFTTRPDTLHGTEYLVLAPDHELINSIIDKNKITELEQFRTEISILTDQERTSDGNNKRGMFLGCHAINPINKKIIPIWVGEYVLSSYATGAVMGVPAHDKRDYKFAKKYSLPIQYVIKSPSQEASDLEASSAYVKEGIMINSGEFNGINSKEAGFMITKLGVKQGWAKNKVTYKLRDWLISRQRMWGCPIPIIYCPDCGSVPVKREELPVKLTNPSVIGKSQENKNNIPIMKCSKCNKDSILETDTMDTFMCSSWYFLRYIDVENNKLPFTKTEVDKWLPVDQYVGGIEHAILHLLYSRFLIKALRNRGLLNIKEPFSNLLTQGMVQGVTFKNPKTSKYISPDHINDINTPLDPETGEPLDVLYEKMSKSKYNGVDPASVIDKYGTDTARMFILFKAPPEKDLEWDESDVEGQYRFLNRLWRIVIYSIETKDINISNCTQEILLNDLSDKERKLIKVLNNTIKEVTNDLVNDFQFNTAISELMILCNSIYENIDDCGDYIVTETFKKLTLLLAPFAPHIAEEFWIKLKGKGSVHENSWPTYDPKALLEDSYKLIIQINGKVRGNISVNHEDSELELKNKALACETTQKWLNGIEPKRIIIVKGKIINIVF.

Residues 55-65 carry the 'HIGH' region motif; the sequence is PYPSGTLHMGH. Residues 626–630 carry the 'KMSKS' region motif; that stretch reads KMSKS. Lysine 629 is an ATP binding site.

It belongs to the class-I aminoacyl-tRNA synthetase family.

It is found in the cytoplasm. It catalyses the reaction tRNA(Leu) + L-leucine + ATP = L-leucyl-tRNA(Leu) + AMP + diphosphate. This is Leucine--tRNA ligase from Prochlorococcus marinus (strain SARG / CCMP1375 / SS120).